The primary structure comprises 629 residues: MYLERIDSPQDLKRLSVPELEKLAEEIREAIIEVVLGKTGGHFAPNLGTVELTLALHYVFDSPRDKIVWDVGHQAYPHKLVTGRRDRFHTIRQEGGLSGFLQREESPHDHFGAGHASTSISAALGMAVAAKLRGDRYHTIAVIGDGALTGGMAYEALNHAGALQVPLIVVLNDNEMSIAPNVGALARYLTRVRTDTRYRQAKVEIERLLRRLPQGERLVELSHRFLDGLKEVVYRTMIWEELGFTYIGPIDGHNLRELIETFQLVKTFDSPVFVHVLTVKGKGYQPAEDDPFKHHSAAVKVPGAPPTPPRYQDVFGQTLVELAAKNDRIVAITAAMPDGTGLLPFAAAYPDRFFDVGIAEQHAVTFAAGLATQGLRPVCAIYSTFLQRAYDQVIHDVCIQKLPVVFAMDRAGLVGEDGRTHHGVFDVAYLRCLPNMVLMAPKDEDELRHMLATALAYEEGPIALRYPRGSGVGVPMLGEPRVLPIGRAELLREGSDVAIVALGATVLPAERAADILAERGIRATVINARFVKPLDRSLILDAARECGCLVTVEEAQLAGGFGSAVLETLADAGLLIPVLRLGLADRFFDHASQASLRRQAGIDAESIASRTLAFLATHGRIETGAISDR.

Residues His73 and 114–116 (GHA) contribute to the thiamine diphosphate site. Residue Asp145 participates in Mg(2+) binding. Thiamine diphosphate is bound by residues 146-147 (GA), Asn174, Tyr284, and Glu360. Asn174 contributes to the Mg(2+) binding site.

Belongs to the transketolase family. DXPS subfamily. Homodimer. The cofactor is Mg(2+). Requires thiamine diphosphate as cofactor.

The enzyme catalyses D-glyceraldehyde 3-phosphate + pyruvate + H(+) = 1-deoxy-D-xylulose 5-phosphate + CO2. Its pathway is metabolic intermediate biosynthesis; 1-deoxy-D-xylulose 5-phosphate biosynthesis; 1-deoxy-D-xylulose 5-phosphate from D-glyceraldehyde 3-phosphate and pyruvate: step 1/1. Catalyzes the acyloin condensation reaction between C atoms 2 and 3 of pyruvate and glyceraldehyde 3-phosphate to yield 1-deoxy-D-xylulose-5-phosphate (DXP). The protein is 1-deoxy-D-xylulose-5-phosphate synthase of Thermomicrobium roseum (strain ATCC 27502 / DSM 5159 / P-2).